Consider the following 397-residue polypeptide: Vacuolar protein sorting-associated protein 37A (397 aa).

The tract at residues 1 to 22 is disordered; the sequence is MSWLFPLTKSASSSAAGSPGGL. Serine 18 is subject to Phosphoserine. The VPS37 C-terminal domain maps to 308-397; the sequence is KSTFEKKMQR…AMHSQFHAPL (90 aa).

It belongs to the VPS37 family. As to quaternary structure, component of the ESCRT-I complex (endosomal sorting complex required for transport I) which consists of TSG101, VPS28, a VPS37 protein (VPS37A to -D) and MVB12A or MVB12B in a 1:1:1:1 stoichiometry. Interacts with TSG101, VPS28 and HGS. Component of an ESCRT-I complex (endosomal sorting complex required for transport I) which consists of TSG101, VPS28, VPS37A and UBAP1 in a 1:1:1:1 stoichiometry. Widely expressed. Examined tissues include heart, brain, placenta, liver, skeletal muscle, kidney and pancreas. More abundant in liver. Strongly decreased or undetected in hepatomas.

The protein resides in the late endosome membrane. It is found in the nucleus. Component of the ESCRT-I complex, a regulator of vesicular trafficking process. Required for the sorting of endocytic ubiquitinated cargos into multivesicular bodies. May be involved in cell growth and differentiation. The polypeptide is Vacuolar protein sorting-associated protein 37A (VPS37A) (Homo sapiens (Human)).